Consider the following 148-residue polypeptide: Oleosin 1 (148 aa).

Ala2 carries the N-acetylalanine modification. The polar stretch occupies residues Ala2–Lys28. The tract at residues Ala29–Ser148 is hydrophobic. 2 helical membrane passes run Gly37–Ala57 and Gly81–Lys101.

It belongs to the oleosin family.

It is found in the lipid droplet. Its subcellular location is the membrane. In terms of biological role, may have a structural role to stabilize the lipid body during desiccation of the seed by preventing coalescence of the oil. Probably interacts with both lipid and phospholipid moieties of lipid bodies. May also provide recognition signals for specific lipase anchorage in lipolysis during seedling growth. The chain is Oleosin 1 (OLE1) from Prunus dulcis (Almond).